The sequence spans 439 residues: Ribosomal protein uS12 methylthiotransferase RimO (439 aa).

Positions 7-119 constitute an MTTase N-terminal domain; sequence KQLCLISLGC…IDILIAKKQN (113 aa). Residues cysteine 16, cysteine 50, cysteine 82, cysteine 151, cysteine 155, and cysteine 158 each contribute to the [4Fe-4S] cluster site. The Radical SAM core domain maps to 137–368; that stretch reads TGSSVHAYVK…ALKHQNHSFK (232 aa).

It belongs to the methylthiotransferase family. RimO subfamily. Requires [4Fe-4S] cluster as cofactor.

The protein resides in the cytoplasm. The enzyme catalyses L-aspartate(89)-[ribosomal protein uS12]-hydrogen + (sulfur carrier)-SH + AH2 + 2 S-adenosyl-L-methionine = 3-methylsulfanyl-L-aspartate(89)-[ribosomal protein uS12]-hydrogen + (sulfur carrier)-H + 5'-deoxyadenosine + L-methionine + A + S-adenosyl-L-homocysteine + 2 H(+). Functionally, catalyzes the methylthiolation of an aspartic acid residue of ribosomal protein uS12. In Helicobacter pylori (strain HPAG1), this protein is Ribosomal protein uS12 methylthiotransferase RimO.